Consider the following 333-residue polypeptide: CMP-N-acetylneuraminate-beta-galactosamide-alpha-2,3-sialyltransferase 4 (333 aa).

Residues 1-8 (MTSKSHWK) lie on the Cytoplasmic side of the membrane. The helical; Signal-anchor for type II membrane protein transmembrane segment at 9–26 (LLALALVLVVVMVWYSIS) threads the bilayer. Residues 27–333 (REDRYIEFFY…MGAVKNLTYF (307 aa)) lie on the Lumenal side of the membrane. N-linked (GlcNAc...) asparagine glycans are attached at residues Asn61, Asn131, Asn310, and Asn329. Cys120 and Cys273 are joined by a disulfide.

The protein belongs to the glycosyltransferase 29 family.

It localises to the golgi apparatus. It is found in the golgi stack membrane. The catalysed reaction is a beta-D-galactosyl-(1-&gt;3)-N-acetyl-beta-D-galactosaminyl derivative + CMP-N-acetyl-beta-neuraminate = an N-acetyl-alpha-neuraminyl-(2-&gt;3)-beta-D-galactosyl-(1-&gt;3)-N-acetyl-beta-D-galactosaminyl derivative + CMP + H(+). It catalyses the reaction a beta-D-galactosyl-(1-&gt;3)-N-acetyl-alpha-D-galactosaminyl derivative + CMP-N-acetyl-beta-neuraminate = an N-acetyl-alpha-neuraminyl-(2-&gt;3)-beta-D-galactosyl-(1-&gt;3)-N-acetyl-alpha-D-galactosaminyl derivative + CMP + H(+). It carries out the reaction a beta-D-galactosyl-(1-&gt;4)-N-acetyl-beta-D-glucosaminyl derivative + CMP-N-acetyl-beta-neuraminate = an N-acetyl-alpha-neuraminyl-(2-&gt;3)-beta-D-galactosyl-(1-&gt;4)-N-acetyl-beta-D-glucosaminyl derivative + CMP + H(+). The enzyme catalyses a ganglioside GM1 (d18:1(4E)) + CMP-N-acetyl-beta-neuraminate = a ganglioside GD1a (d18:1(4E)) + CMP + H(+). The catalysed reaction is a ganglioside GA1 (d18:1(4E)) + CMP-N-acetyl-beta-neuraminate = a ganglioside GM1b (d18:1(4E)) + CMP + H(+). It catalyses the reaction a ganglioside GT1c (d18:1(4E)) + CMP-N-acetyl-beta-neuraminate = a ganglioside GQ1c (d18:1(4E)) + CMP + H(+). It carries out the reaction a neolactoside nLc4Cer + CMP-N-acetyl-beta-neuraminate = a neolactoside IV(3)-alpha-NeuAc-nLc4Cer + CMP + H(+). The enzyme catalyses a neolactoside nLc4Cer(d18:1(4E)) + CMP-N-acetyl-beta-neuraminate = a neolactoside IV(3)-alpha-NeuAc-nLc4Cer(d18:1(4E)) + CMP + H(+). Its pathway is protein modification; protein glycosylation. It functions in the pathway glycolipid biosynthesis. In terms of biological role, a beta-galactoside alpha2-3 sialyltransferase involved in terminal sialylation of glycoproteins and glycolipids. Catalyzes the transfer of sialic acid (N-acetyl-neuraminic acid; Neu5Ac) from the nucleotide sugar donor CMP-Neu5Ac onto acceptor Galbeta-(1-&gt;3)-GalNAc- and Galbeta-(1-&gt;4)-GlcNAc-terminated glycoconjugates through an alpha2-3 linkage. Plays a major role in hemostasis. Responsible for sialylation of plasma VWF/von Willebrand factor, preventing its recognition by asialoglycoprotein receptors (ASGPR) and subsequent clearance. Regulates ASGPR-mediated clearance of platelets. Participates in the biosynthesis of the sialyl Lewis X epitopes, both on O- and N-glycans, which are recognized by SELE/E-selectin, SELP/P-selectin and SELL/L-selectin. Essential for selectin-mediated rolling and adhesion of leukocytes during extravasation. Contributes to adhesion and transendothelial migration of neutrophils likely through terminal sialylation of CXCR2. In glycosphingolipid biosynthesis, sialylates GM1 and GA1 gangliosides to form GD1a and GM1b, respectively. Metabolizes brain c-series ganglioside GT1c forming GQ1c. Synthesizes ganglioside LM1 (IV3Neu5Ac-nLc4Cer), a major structural component of peripheral nerve myelin. In Rattus norvegicus (Rat), this protein is CMP-N-acetylneuraminate-beta-galactosamide-alpha-2,3-sialyltransferase 4 (St3gal4).